The primary structure comprises 551 residues: Genetic interactor of prohibitins 3, mitochondrial (551 aa).

The N-terminal 24 residues, 1-24, are a transit peptide targeting the mitochondrion; it reads MFVVRRSIVFQQSRRQFSGSIAWL. Residues 118–299 enclose the CP-type G domain; it reads LKEVIRSVPN…IYDLPGYSEN (182 aa).

This sequence belongs to the TRAFAC class YlqF/YawG GTPase family. GEP3 subfamily.

The protein localises to the mitochondrion. Its function is as follows. May be involved in the mitochondrial lipid metabolism. The protein is Genetic interactor of prohibitins 3, mitochondrial (GEP3) of Vanderwaltozyma polyspora (strain ATCC 22028 / DSM 70294 / BCRC 21397 / CBS 2163 / NBRC 10782 / NRRL Y-8283 / UCD 57-17) (Kluyveromyces polysporus).